The primary structure comprises 156 residues: Phosphopantetheine adenylyltransferase (156 aa).

Threonine 9 provides a ligand contact to substrate. ATP is bound by residues 9-10 (TF) and histidine 17. Substrate-binding residues include lysine 41, leucine 73, and arginine 87. ATP contacts are provided by residues 88 to 90 (GVR), glutamate 98, and 123 to 129 (WAFVSST).

This sequence belongs to the bacterial CoaD family. As to quaternary structure, homohexamer. Mg(2+) is required as a cofactor.

It is found in the cytoplasm. The enzyme catalyses (R)-4'-phosphopantetheine + ATP + H(+) = 3'-dephospho-CoA + diphosphate. The protein operates within cofactor biosynthesis; coenzyme A biosynthesis; CoA from (R)-pantothenate: step 4/5. Functionally, reversibly transfers an adenylyl group from ATP to 4'-phosphopantetheine, yielding dephospho-CoA (dPCoA) and pyrophosphate. This Haemophilus influenzae (strain ATCC 51907 / DSM 11121 / KW20 / Rd) protein is Phosphopantetheine adenylyltransferase.